The following is a 510-amino-acid chain: ATP synthase subunit alpha (510 aa).

169-176 (GDRQTGKT) contributes to the ATP binding site.

This sequence belongs to the ATPase alpha/beta chains family. In terms of assembly, F-type ATPases have 2 components, CF(1) - the catalytic core - and CF(0) - the membrane proton channel. CF(1) has five subunits: alpha(3), beta(3), gamma(1), delta(1), epsilon(1). CF(0) has four main subunits: a(1), b(1), b'(1) and c(9-12).

It is found in the cell inner membrane. The catalysed reaction is ATP + H2O + 4 H(+)(in) = ADP + phosphate + 5 H(+)(out). Its function is as follows. Produces ATP from ADP in the presence of a proton gradient across the membrane. The alpha chain is a regulatory subunit. The protein is ATP synthase subunit alpha of Rhodopseudomonas palustris (strain BisA53).